We begin with the raw amino-acid sequence, 487 residues long: NADH-quinone oxidoreductase subunit N (487 aa).

13 consecutive transmembrane segments (helical) span residues 7-27 (ILGPALPEILLAVLGLVLLMV), 38-58 (LVGLLAVYGLLMALAVVGLGA), 79-99 (YAKALTLLGAVLTLLLSMVWL), 111-131 (ILVLFATIGMMMMISANDLIA), 164-184 (FVLGALASGLLLYGMSLVYGF), 207-227 (LLIGIVFIIAGLAFKVSAVPF), 238-258 (APTPVTAFFAVAPKIAALTLF), 276-296 (VIILISILSMLLGGFAAIVQT), 301-321 (LMAYSSIGHVGYALIGIAAGT), 328-348 (VLVYLAIYLFMNVGTFTVILA), 373-393 (AAAMAVFMFSMAGVPPLAGFF), 406-426 (GLFALAVIGVLSSVVAAFYYL), and 451-471 (VILIGTAAVVALFFLAPSVVV).

It belongs to the complex I subunit 2 family. NDH-1 is composed of 14 different subunits. Subunits NuoA, H, J, K, L, M, N constitute the membrane sector of the complex.

It is found in the cell inner membrane. The enzyme catalyses a quinone + NADH + 5 H(+)(in) = a quinol + NAD(+) + 4 H(+)(out). NDH-1 shuttles electrons from NADH, via FMN and iron-sulfur (Fe-S) centers, to quinones in the respiratory chain. The immediate electron acceptor for the enzyme in this species is believed to be ubiquinone. Couples the redox reaction to proton translocation (for every two electrons transferred, four hydrogen ions are translocated across the cytoplasmic membrane), and thus conserves the redox energy in a proton gradient. The sequence is that of NADH-quinone oxidoreductase subunit N from Rhodospirillum rubrum (strain ATCC 11170 / ATH 1.1.1 / DSM 467 / LMG 4362 / NCIMB 8255 / S1).